We begin with the raw amino-acid sequence, 374 residues long: Flap endonuclease 1 (374 aa).

The interval 1 to 105 (MGIKGLTALI…ELLQKRFGRR (105 aa)) is N-domain. Residue D34 participates in Mg(2+) binding. Residues R47 and R71 each coordinate DNA. D87 serves as a coordination point for Mg(2+). A disordered region spans residues 103–122 (GRREEAREQEEEQKDVADAE). Residues 123 to 254 (KMDQLARRQV…KTALKLIREH (132 aa)) form an I-domain region. Residues E159, E161, D180, and D182 each contribute to the Mg(2+) site. E159 is a binding site for DNA. G232 and D234 together coordinate DNA. Residue D234 coordinates Mg(2+). The disordered stretch occupies residues 335-374 (SLSQKQQGRLDGFFTVKPGSAPPKRKAEDDKKNVKKKGKK). The interval 340–348 (QQGRLDGFF) is interaction with PCNA.

Belongs to the XPG/RAD2 endonuclease family. FEN1 subfamily. Interacts with PCNA. Three molecules of FEN1 bind to one PCNA trimer with each molecule binding to one PCNA monomer. PCNA stimulates the nuclease activity without altering cleavage specificity. Mg(2+) serves as cofactor. Post-translationally, phosphorylated. Phosphorylation upon DNA damage induces relocalization to the nuclear plasma.

The protein localises to the nucleus. It localises to the nucleolus. Its subcellular location is the nucleoplasm. The protein resides in the mitochondrion. In terms of biological role, structure-specific nuclease with 5'-flap endonuclease and 5'-3' exonuclease activities involved in DNA replication and repair. During DNA replication, cleaves the 5'-overhanging flap structure that is generated by displacement synthesis when DNA polymerase encounters the 5'-end of a downstream Okazaki fragment. It enters the flap from the 5'-end and then tracks to cleave the flap base, leaving a nick for ligation. Also involved in the long patch base excision repair (LP-BER) pathway, by cleaving within the apurinic/apyrimidinic (AP) site-terminated flap. Acts as a genome stabilization factor that prevents flaps from equilibrating into structures that lead to duplications and deletions. Also possesses 5'-3' exonuclease activity on nicked or gapped double-stranded DNA, and exhibits RNase H activity. Also involved in replication and repair of rDNA and in repairing mitochondrial DNA. The protein is Flap endonuclease 1 of Mycosarcoma maydis (Corn smut fungus).